A 567-amino-acid polypeptide reads, in one-letter code: Major facilitator superfamily transporter MG061 (567 aa).

The next 12 helical transmembrane spans lie at 15–35 (ITLW…WFVI), 78–98 (WTIT…VLKF), 104–124 (VLIM…GDPL), 193–213 (GYAL…TLVV), 230–250 (ILSN…FTPF), 264–284 (VYIM…FLWF), 321–341 (LIGV…PAWF), 363–383 (TGLA…FVVF), 405–425 (IVVL…SAAG), 426–446 (FALI…LSSS), 462–482 (LPIL…LFDI), and 503–523 (PGVI…NLIV).

The protein belongs to the major facilitator superfamily.

The protein localises to the cell membrane. This Mycoplasma genitalium (strain ATCC 33530 / DSM 19775 / NCTC 10195 / G37) (Mycoplasmoides genitalium) protein is Major facilitator superfamily transporter MG061.